Here is a 172-residue protein sequence, read N- to C-terminus: Centrin-2 (172 aa).

The segment at 1-31 (MASNFKKANMASTTQRKRMSPKPELTEEQKQ) is disordered. Residue A2 is modified to N-acetylalanine. The required for self-assembly stretch occupies residues 2 to 25 (ASNFKKANMASTTQRKRMSPKPEL). Position 20 is a phosphoserine (S20). K22 participates in a covalent cross-link: Glycyl lysine isopeptide (Lys-Gly) (interchain with G-Cter in SUMO2). T26 is subject to Phosphothreonine. EF-hand domains are found at residues 28 to 63 (EQKQ…LGFE), 64 to 99 (PKKE…KMSE), 101 to 136 (DTKE…LGEN), and 137 to 172 (LSDE…TSLY). The Ca(2+) site is built by D41, D43, T45, T47, and E52. 5 residues coordinate Ca(2+): D150, D152, D154, E156, and E161.

Belongs to the centrin family. As to quaternary structure, monomer. Homooligomer. Interacts with CCP110, SFI1. Component of the XPC complex composed of XPC, RAD23B and CETN2. Component of the nuclear pore complex (NPC)-associated TREX-2 complex (transcription and export complex 2), composed of at least GANP, 2 copies of ENY2, PCID2, SEM1/DSS1, and either centrin CETN2 or centrin CETN3. The TREX-2 complex also associates with ALYREF/ALY and with the nucleoporin NUP153. Interacts with USP49. Forms a microtubule-associated complex with POC5, POC1B and FAM161A. Interacts with CCDC15.

The protein localises to the cytoplasm. It is found in the cytoskeleton. Its subcellular location is the microtubule organizing center. It localises to the centrosome. The protein resides in the centriole. The protein localises to the nucleus. It is found in the nucleus envelope. Its subcellular location is the nuclear pore complex. In terms of biological role, plays a fundamental role in microtubule organizing center structure and function. Required for centriole duplication and correct spindle formation. Has a role in regulating cytokinesis and genome stability via cooperation with CALM1 and CCP110. Functionally, involved in global genome nucleotide excision repair (GG-NER) by acting as component of the XPC complex. Cooperatively with RAD23B appears to stabilize XPC. In vitro, stimulates DNA binding of the XPC:RAD23B dimer. The XPC complex is proposed to represent the first factor bound at the sites of DNA damage and together with other core recognition factors, XPA, RPA and the TFIIH complex, is part of the pre-incision (or initial recognition) complex. The XPC complex recognizes a wide spectrum of damaged DNA characterized by distortions of the DNA helix such as single-stranded loops, mismatched bubbles or single-stranded overhangs. The orientation of XPC complex binding appears to be crucial for inducing a productive NER. XPC complex is proposed to recognize and to interact with unpaired bases on the undamaged DNA strand which is followed by recruitment of the TFIIH complex and subsequent scanning for lesions in the opposite strand in a 5'-to-3' direction by the NER machinery. Cyclobutane pyrimidine dimers (CPDs) which are formed upon UV-induced DNA damage esacpe detection by the XPC complex due to a low degree of structural perurbation. Instead they are detected by the UV-DDB complex which in turn recruits and cooperates with the XPC complex in the respective DNA repair. Its function is as follows. As a component of the TREX-2 complex, involved in the export of mRNAs to the cytoplasm through the nuclear pores. The polypeptide is Centrin-2 (CETN2) (Bos taurus (Bovine)).